Here is a 233-residue protein sequence, read N- to C-terminus: 4'-phosphopantetheinyl transferase psf-1 (233 aa).

3 residues coordinate Mg(2+): Asp-110, Glu-112, and Glu-154. The interval Gly-161–Cys-192 is peptidyl carrier protein binding.

It belongs to the P-Pant transferase superfamily. Gsp/Sfp/HetI/AcpT family. The cofactor is Mg(2+).

It carries out the reaction apo-[peptidyl-carrier protein] + CoA = holo-[peptidyl-carrier protein] + adenosine 3',5'-bisphosphate + H(+). In terms of biological role, probably activates the peptidyl carrier protein (PCP) domains of surfactin synthetase by transferring the 4'-phosphopantetheinyl moiety of coenzyme A (CoA) to a serine residue. Required for the production of the lipopeptide antibiotic, surfactin. The sequence is that of 4'-phosphopantetheinyl transferase psf-1 (psf-1) from Bacillus pumilus (Bacillus mesentericus).